The primary structure comprises 204 residues: Inositol diphosphatase DSP2 (204 aa).

The segment at 1–27 (MQLEISPRQRSQQQKEEEGEHQQRAGE) is disordered. Over residues 13–27 (QQKEEEGEHQQRAGE) the composition is skewed to basic and acidic residues. The Tyrosine-protein phosphatase domain occupies 51–203 (NFAEVNDGIF…SSLMHLTASQ (153 aa)). The WPD loop important for active site topology stretch occupies residues 107–119 (FGIDGSKELLVNI). 3 residues coordinate 1D-myo-inositol hexakisphosphate: Asn118, Ile119, and Lys123. Cys143 serves as the catalytic Phosphocysteine intermediate.

This sequence belongs to the protein-tyrosine phosphatase family. Atypical dual-specificity phosphatase Siw14-like subfamily. As to expression, expressed in roots and young panicles.

The protein localises to the cytoplasm. It is found in the nucleus. It carries out the reaction 5-diphospho-1D-myo-inositol 1,2,3,4,6-pentakisphosphate + H2O = 1D-myo-inositol hexakisphosphate + phosphate + H(+). The enzyme catalyses 1,5-bis(diphospho)-1D-myo-inositol 2,3,4,6-tetrakisphosphate + H2O = 1-diphospho-1D-myo-inositol 2,3,4,5,6-pentakisphosphate + phosphate + 2 H(+). It catalyses the reaction 3,5-bis(diphospho)-1D-myo-inositol 1,2,4,6-tetrakisphosphate + H2O = 3-diphospho-1D-myo-inositol 1,2,4,5,6-pentakisphosphate + phosphate + 2 H(+). The catalysed reaction is 6-diphospho-1D-myo-inositol pentakisphosphate + H2O = 1D-myo-inositol hexakisphosphate + phosphate + H(+). Its function is as follows. Cleaves the beta-phosphate at the 5-position of soluble inositol pyrophosphates. Has highest activity on 5-diphosphoinositol 1,2,3,4,6-pentakisphosphate (5-InsP(7)). Acts as a negative regulator of defense responses against the fungal pathogen Magnaporthe oryzae. This is Inositol diphosphatase DSP2 from Oryza sativa subsp. japonica (Rice).